A 66-amino-acid chain; its full sequence is SPbeta prophage-derived uncharacterized protein YosK (66 aa).

The chain is SPbeta prophage-derived uncharacterized protein YosK (yosK) from Bacillus subtilis (strain 168).